The chain runs to 34 residues: Photosystem II reaction center protein M (34 aa).

Residues 5 to 25 (ILAFIATALFILVPTAFLLII) form a helical membrane-spanning segment.

The protein belongs to the PsbM family. In terms of assembly, PSII is composed of 1 copy each of membrane proteins PsbA, PsbB, PsbC, PsbD, PsbE, PsbF, PsbH, PsbI, PsbJ, PsbK, PsbL, PsbM, PsbT, PsbX, PsbY, PsbZ, Psb30/Ycf12, at least 3 peripheral proteins of the oxygen-evolving complex and a large number of cofactors. It forms dimeric complexes.

It is found in the plastid. The protein resides in the chloroplast thylakoid membrane. Functionally, one of the components of the core complex of photosystem II (PSII). PSII is a light-driven water:plastoquinone oxidoreductase that uses light energy to abstract electrons from H(2)O, generating O(2) and a proton gradient subsequently used for ATP formation. It consists of a core antenna complex that captures photons, and an electron transfer chain that converts photonic excitation into a charge separation. This subunit is found at the monomer-monomer interface. This is Photosystem II reaction center protein M from Cenchrus americanus (Pearl millet).